A 593-amino-acid chain; its full sequence is Probable serine/threonine-protein kinase fhkA (593 aa).

Residues 1–24 (MSQTNYIPSTPNKSTPPSELSSTP) form a disordered region. Residues 54–111 (ITIGRSKTCNIVVPELIVSGKHCIITRADAIENGNTNYGLLMIQDQSTNGTFINGKLI) enclose the FHA domain. The region spanning 180–472 (YDFIKELGSG…VEQALNHPWI (293 aa)) is the Protein kinase domain. Residues 186-194 (LGSGNFSVV) and lysine 209 each bind ATP. The active-site Proton acceptor is the aspartate 307.

It belongs to the protein kinase superfamily. CAMK Ser/Thr protein kinase family. CHK2 subfamily.

It catalyses the reaction L-seryl-[protein] + ATP = O-phospho-L-seryl-[protein] + ADP + H(+). The catalysed reaction is L-threonyl-[protein] + ATP = O-phospho-L-threonyl-[protein] + ADP + H(+). The sequence is that of Probable serine/threonine-protein kinase fhkA (fhkA) from Dictyostelium discoideum (Social amoeba).